A 521-amino-acid chain; its full sequence is GMP synthase [glutamine-hydrolyzing] (521 aa).

Residues 8–203 (KILILDFGAQ…VVDVCGCQTL (196 aa)) form the Glutamine amidotransferase type-1 domain. Cys85 acts as the Nucleophile in catalysis. Residues His177 and Glu179 contribute to the active site. Residues 204–396 (WTAANIIEDQ…LGLPRTMVYR (193 aa)) enclose the GMPS ATP-PPase domain. 231-237 (SGGVDSS) provides a ligand contact to ATP.

In terms of assembly, homodimer.

The catalysed reaction is XMP + L-glutamine + ATP + H2O = GMP + L-glutamate + AMP + diphosphate + 2 H(+). Its pathway is purine metabolism; GMP biosynthesis; GMP from XMP (L-Gln route): step 1/1. Catalyzes the synthesis of GMP from XMP. The sequence is that of GMP synthase [glutamine-hydrolyzing] from Xanthomonas axonopodis pv. citri (strain 306).